We begin with the raw amino-acid sequence, 269 residues long: Undecaprenyl-diphosphatase (269 aa).

8 helical membrane-spanning segments follow: residues 1–21 (MSIF…FLPI), 39–59 (LPIL…CTVF), 86–106 (LMMI…GLLL), 112–132 (TIDI…LIAS), 144–164 (VTLL…IPGI), 184–204 (AGEF…ILEI), 210–230 (LLAG…FVVG), and 249–269 (FAFY…GFAG).

This sequence belongs to the UppP family.

It localises to the cell inner membrane. The enzyme catalyses di-trans,octa-cis-undecaprenyl diphosphate + H2O = di-trans,octa-cis-undecaprenyl phosphate + phosphate + H(+). In terms of biological role, catalyzes the dephosphorylation of undecaprenyl diphosphate (UPP). Confers resistance to bacitracin. The protein is Undecaprenyl-diphosphatase of Treponema denticola (strain ATCC 35405 / DSM 14222 / CIP 103919 / JCM 8153 / KCTC 15104).